Here is a 400-residue protein sequence, read N- to C-terminus: Elongation factor Tu (400 aa).

Residues 10–208 (KPHVNVGTIG…AMDNYIPEPQ (199 aa)) enclose the tr-type G domain. A G1 region spans residues 19–26 (GHIDHGKS). 19-26 (GHIDHGKS) is a binding site for GTP. Serine 26 lines the Mg(2+) pocket. A G2 region spans residues 60 to 64 (GITIN). Residues 81–84 (DCPG) form a G3 region. Residues 81 to 85 (DCPGH) and 136 to 139 (NKTD) contribute to the GTP site. Residues 136 to 139 (NKTD) form a G4 region. Residues 174-176 (SAL) form a G5 region.

It belongs to the TRAFAC class translation factor GTPase superfamily. Classic translation factor GTPase family. EF-Tu/EF-1A subfamily. Monomer.

It localises to the cytoplasm. The catalysed reaction is GTP + H2O = GDP + phosphate + H(+). In terms of biological role, GTP hydrolase that promotes the GTP-dependent binding of aminoacyl-tRNA to the A-site of ribosomes during protein biosynthesis. The polypeptide is Elongation factor Tu (Thermotoga petrophila (strain ATCC BAA-488 / DSM 13995 / JCM 10881 / RKU-1)).